A 542-amino-acid chain; its full sequence is Katanin p60 ATPase-containing subunit A-like 2 (542 aa).

The LisH domain occupies 25-57; the sequence is RRKNLLILIMHYLLQEGYMDSANSLEQETKISL. Disordered regions lie at residues 94-126 and 142-168; these read LDHD…RIAQ and HAHQ…ASEI. Positions 114–126 are enriched in polar residues; sequence GSNSTQGLPRIAQ. Residue 298-305 participates in ATP binding; that stretch reads GPPGTGKT.

Belongs to the AAA ATPase family. Katanin p60 subunit A1 subfamily. A-like 2 sub-subfamily.

The protein resides in the cytoplasm. The protein localises to the cytoskeleton. It localises to the spindle. Its subcellular location is the spindle pole. It carries out the reaction n ATP + n H2O + a microtubule = n ADP + n phosphate + (n+1) alpha/beta tubulin heterodimers.. Functionally, severs microtubules in vitro in an ATP-dependent manner. This activity may promote rapid reorganization of cellular microtubule arrays. The chain is Katanin p60 ATPase-containing subunit A-like 2 (katnal2) from Xenopus tropicalis (Western clawed frog).